The sequence spans 540 residues: Chaperonin GroEL (540 aa).

ATP contacts are provided by residues 29–32 (TLGP), 86–90 (DGTTT), Gly-413, and Asp-493. The interval 520–540 (AEKPEPKPAPGPADPGAGMDF) is disordered.

Belongs to the chaperonin (HSP60) family. Forms a cylinder of 14 subunits composed of two heptameric rings stacked back-to-back. Interacts with the co-chaperonin GroES.

It is found in the cytoplasm. The enzyme catalyses ATP + H2O + a folded polypeptide = ADP + phosphate + an unfolded polypeptide.. In terms of biological role, together with its co-chaperonin GroES, plays an essential role in assisting protein folding. The GroEL-GroES system forms a nano-cage that allows encapsulation of the non-native substrate proteins and provides a physical environment optimized to promote and accelerate protein folding. The polypeptide is Chaperonin GroEL (Tropheryma whipplei (Whipple's bacillus)).